Here is a 401-residue protein sequence, read N- to C-terminus: Cartilage-associated protein (401 aa).

The first 26 residues, 1-26, serve as a signal peptide directing secretion; that stretch reads MEPGRRGAAALLALLCVACALRAGRA. 2 N-linked (GlcNAc...) asparagine glycosylation sites follow: asparagine 87 and asparagine 363.

The protein belongs to the leprecan family. As to expression, found in articular chondrocytes. Expressed in a variety of tissues.

Its subcellular location is the secreted. The protein resides in the extracellular space. It localises to the extracellular matrix. Functionally, necessary for efficient 3-hydroxylation of fibrillar collagen prolyl residues. This Homo sapiens (Human) protein is Cartilage-associated protein (CRTAP).